The chain runs to 513 residues: Sucrose transport protein SUC1 (513 aa).

Over residues 1 to 11 the composition is skewed to basic and acidic residues; that stretch reads MGAYETEKPTK. The tract at residues 1 to 26 is disordered; sequence MGAYETEKPTKDAAALETQSPEDFDQ. Topologically, residues 1 to 32 are cytoplasmic; sequence MGAYETEKPTKDAAALETQSPEDFDQPSPLRK. S20 bears the Phosphoserine mark. Residues 33–53 traverse the membrane as a helical segment; the sequence is IISVASIAAGVQFGWALQLSL. Over 54-67 the chain is Extracellular; sequence LTPYVQLLGIPHKW. The chain crosses the membrane as a helical span at residues 68-88; sequence SSLIWLCGPVSGMIVQPIVGF. At 89–101 the chain is on the cytoplasmic side; the sequence is HSDRCRSKFGRRR. The chain crosses the membrane as a helical span at residues 102–122; the sequence is PFIATGAALVAVAVFLIGYAA. The Extracellular segment spans residues 123–139; it reads DFGYKMGDKLEEKVKVR. The chain crosses the membrane as a helical span at residues 140 to 160; sequence AIGIFALGFWILDVANNTLQG. The Cytoplasmic portion of the chain corresponds to 161–178; that stretch reads PCRAFLADLAAGDAKRTR. The helical transmembrane segment at 179 to 199 threads the bilayer; that stretch reads VANAFFSFFMAVGNVLGYAAG. Residues 200-224 lie on the Extracellular side of the membrane; the sequence is SYTNLHKMFPFTMTKACDIYCANLK. A helical transmembrane segment spans residues 225 to 245; sequence TCFFLSITLLLIVTVTSLWYV. Residues 246-282 are Cytoplasmic-facing; sequence NDKQWSPPPRNADDDEKTSSVPLFGEIFGAFKVMKRP. Residues 283 to 303 form a helical membrane-spanning segment; it reads MWMLLIVTALNWIAWFPFLLF. Over 304–334 the chain is Extracellular; that stretch reads DTDWMGREVFGGDSDGNERSKKLYSLGVQSG. Residues 335–355 traverse the membrane as a helical segment; it reads AMGLMFNSIVLGFMSLGVEWI. Residues 356–365 are Cytoplasmic-facing; the sequence is GRKLGGAKRL. Residues 366 to 386 form a helical membrane-spanning segment; that stretch reads WGIVNFILAAGLAMTVLVTKF. Over 387–408 the chain is Extracellular; the sequence is AEDHRKTAGDLAGPSASVKAGA. Residues 409–429 traverse the membrane as a helical segment; sequence LSLFAVLGIPLAITFSTPFAL. Residues 430 to 441 lie on the Cytoplasmic side of the membrane; it reads ASIFSSCSGAGQ. The chain crosses the membrane as a helical span at residues 442–462; sequence GLSLGVLNLAIVIPQMIVSLG. Topologically, residues 463 to 474 are extracellular; it reads GGPFDALFGGGN. Residues 475 to 495 form a helical membrane-spanning segment; sequence LPAFIVAAIAAAISGVLALTV. The Cytoplasmic segment spans residues 496–513; that stretch reads LPSPPPDAPKATTMGGFH.

Belongs to the glycoside-pentoside-hexuronide (GPH) cation symporter transporter (TC 2.A.2.4) family. As to expression, expressed in flowers (at protein level). Highly expressed in pollen. Expressed in pollen tubes and root vascular cylinder, pericycle and endodermis.

It is found in the membrane. The enzyme catalyses sucrose(out) + H(+)(out) = sucrose(in) + H(+)(in). It functions in the pathway glycan biosynthesis; sucrose metabolism. Inhibited by DEPC, protonophores (e.g. dinitrophenol and carbonyl cyanide m-chlorophenyl-hydrazone (CCCP)), and SH group inhibitors (e.g. N-ethylmaleimide (NEM) and p-chloromercuriphenyl sulphonic acid (PCMPS)). Responsible for the transport of sucrose into the cell, with the concomitant uptake of protons (symport system). This transport is both voltage- and energy-dependent. Can also transport other glucosides such as maltose, alpha-phenylglucoside and beta-phenylglucoside. May also transport biotin. Required for normal pollen germination and anthocyanin accumulation induced by sucrose. In Arabidopsis thaliana (Mouse-ear cress), this protein is Sucrose transport protein SUC1.